We begin with the raw amino-acid sequence, 235 residues long: MAETWMALPLFNRQNSPESSRDVLSMASPGLLPIDPSPEHDETNKFGPFDLLDNLPGELQLPADLNPARVGPTTHLPDLTDRADPEPRWMQISDLEVVGPGAVTCPFPGCKSTLRFTGSRELRRHYKQHFKRFFCRYPHCPQAGPGLQGPHPSTKRGFATRKDRARHEAKHDPRIQCPCLDERGERCSRMFSRLDNMRDHVRRIHNNSHYAGQETHGTADAIPDIDIHHEIEARS.

Residues 14-45 (QNSPESSRDVLSMASPGLLPIDPSPEHDETNK) are disordered. The C2H2-type zinc-finger motif lies at 175-205 (IQCPCLDERGERCSRMFSRLDNMRDHVRRIH).

Its subcellular location is the nucleus. Transcription factor; part of the gene cluster that mediates the biosynthesis of heptelidic acid (HA), a sesquiterpene lactone that acts as an inhibitor of glyceraldehyde-3-phosphatedehydrogenase (GAPDH) and a growth inhibitor of the salt-tolerant lactic acid bacteria in soy sauce brewing. Both hepR and hepS regulate the transcription of the heptelidic acid cluster, but they are not involved in mutual transcriptional regulation and act with different mechanisms. This is Transcription factor hepR from Aspergillus oryzae (strain ATCC 42149 / RIB 40) (Yellow koji mold).